Here is a 161-residue protein sequence, read N- to C-terminus: Bacterial E2-like ubiquitin protein BilB (161 aa).

Residue Cys-113 is the Glycyl thioester intermediate of the active site.

Its function is as follows. Component of the Bil (bacterial ISG15-like) antiviral defense system, composed of BilA, BilB, BilC and BilD. The Bil system specifically conjugates a ubiquitin-like moiety (bilA) to the bacteriophage central tail fiber (CTF, or tip attachment protein J) via reactions involving E1 (bilD) and E2 (bilB). Modifies CTF of phage SECphi27 and SECphi4, which probably interferes with assembly of the phage tail. Also modifies T5 baseplate hub protein pb3 (gene D16), but not gp27 of phage T6 (Bil defends against T6). BilB probably accepts ubiquitin from the BilA-BilD (E1) complex and catalyzes its covalent attachment to target protein (CTF). Bil-encoding bacteria produce mostly defective phage SECphi27, many of which have phage assembly defects, including no tails. SECphi27 phage progeny produced in E.coli with the Bil system inject less DNA into naive host cells, maybe because the phage are less able to adsorb and inject their DNA into host cells. Expression of the Bil system in E.coli (strain MG1655) confers about 100-fold resistance to phage SECphi27, SECphi18, SECphi6, SECphi4 and T5, but not to SECphi17. When cells expressing the Bil system are infected by phage SECphi27 at low multiplicity of infection (0.03 MOI) the culture survives, at 3.0 MOI the culture collapses at the same time as cells without the Bil system. The protein is Bacterial E2-like ubiquitin protein BilB of Collimonas sp. (strain OK412).